We begin with the raw amino-acid sequence, 481 residues long: Cysteine protease atg-4.1 (481 aa).

The active-site Nucleophile is cysteine 112. Catalysis depends on residues aspartate 313 and histidine 315. Residues 462 to 481 are disordered; that stretch reads DVHTEEEDADEDNDDDVANA.

It belongs to the peptidase C54 family.

It localises to the cytoplasm. It carries out the reaction [protein]-C-terminal L-amino acid-glycyl-phosphatidylethanolamide + H2O = [protein]-C-terminal L-amino acid-glycine + a 1,2-diacyl-sn-glycero-3-phosphoethanolamine. Functionally, cysteine protease required for autophagy. Cleaves the C-terminal amino acid of ATG8 family proteins lgg-1, to reveal a C-terminal glycine. Exposure of the glycine at the C-terminus is essential for ATG8 proteins conjugation to phosphatidylethanolamine (PE) and insertion to membranes, which is necessary for autophagy. Its cleavage activity is functionally redundant to atg-4.2, but it cleaves lgg-1 precursors more efficiently than atg-4.2. Acts redundantly with atg-4.2 to promote the lgg-1 delipidation to release the protein from membranes, which facilitates multiple events during macroautophagy. Unlike atg-4.2 does not seem to be required for autophagosome maturation. The protein is Cysteine protease atg-4.1 of Caenorhabditis elegans.